Here is a 308-residue protein sequence, read N- to C-terminus: Glutaminase (308 aa).

The substrate site is built by serine 66, asparagine 117, glutamate 161, asparagine 168, tyrosine 192, tyrosine 244, and valine 262.

It belongs to the glutaminase family. As to quaternary structure, homotetramer.

It catalyses the reaction L-glutamine + H2O = L-glutamate + NH4(+). The polypeptide is Glutaminase (Proteus mirabilis (strain HI4320)).